The following is a 386-amino-acid chain: Inactive GDSL esterase/lipase-like protein 23 (386 aa).

A signal peptide spans 1-29 (MMAKNCNLVSVLCVFLVLTLFNKPITVAG). Ser43 serves as the catalytic Nucleophile. 3 N-linked (GlcNAc...) asparagine glycosylation sites follow: Asn105, Asn165, and Asn288. Residues Asp322 and His325 contribute to the active site.

This sequence belongs to the 'GDSL' lipolytic enzyme family. Part of the PYK10 complex. Interacts with MVP1. In terms of tissue distribution, expressed mainly in roots.

Its subcellular location is the endoplasmic reticulum. Its function is as follows. Involved in the control of the PYK10 complex size and possibly substrate specificity. May be exported from the endoplasmic reticulum upon interaction with MVP1. The sequence is that of Inactive GDSL esterase/lipase-like protein 23 (GLL23) from Arabidopsis thaliana (Mouse-ear cress).